The sequence spans 526 residues: Peptide chain release factor 3 (526 aa).

The 270-residue stretch at 8-277 (SKRRTFAIIS…GLTRWAPAPQ (270 aa)) folds into the tr-type G domain. GTP is bound by residues 17-24 (SHPDAGKT), 85-89 (DTPGH), and 139-142 (NKLD).

Belongs to the TRAFAC class translation factor GTPase superfamily. Classic translation factor GTPase family. PrfC subfamily.

The protein resides in the cytoplasm. In terms of biological role, increases the formation of ribosomal termination complexes and stimulates activities of RF-1 and RF-2. It binds guanine nucleotides and has strong preference for UGA stop codons. It may interact directly with the ribosome. The stimulation of RF-1 and RF-2 is significantly reduced by GTP and GDP, but not by GMP. The sequence is that of Peptide chain release factor 3 from Vibrio atlanticus (strain LGP32) (Vibrio splendidus (strain Mel32)).